Consider the following 158-residue polypeptide: MLP-like protein 43 (158 aa).

An N-acetylalanine modification is found at Ala-2.

The protein belongs to the MLP family.

The polypeptide is MLP-like protein 43 (MLP43) (Arabidopsis thaliana (Mouse-ear cress)).